The chain runs to 444 residues: MKHFEANFDGLVGPTHNYAGLSFGNVASYSNAAQTANPKAAAKQGLQKAKALADLGMTQGVLAPQERPDLYTLRRIGFSGSDAEVIQKAAKQAPALLNACCSASSMWTANAATVSPSADTRDGKVHFTPANLVDKLHRSIEPITTANILKATFKDPHFFQHHAHLPEHAHFGDEGAANHTRLCGEYGHSGVELFVYGQEATNPNAPKPKKYPARQTLEASQAIARLHQLEDESTVFMQQNPDVIDQGVFHNDVISVGNQNVLFYHEQAFLNTDAKFDEIRRKMNADMHFVKVATSQVSIDDAVKSYLFNTQIITLPSGEMTIIAPTDCQENLAVFAYLNELVTLGTPIKQVRYYDVKQSMQNGGGPACLRLRVALNDQELAAVNQDTLMNDALFGRLNTWVEKHYRDSLSVKDLADPQLIVESRTALDELTQILKLGSVYQFQK.

Residues 19-28 (AGLSFGNVAS), asparagine 110, and 137-138 (HR) contribute to the substrate site. The active site involves glutamate 174. Position 214 (arginine 214) interacts with substrate. Histidine 250 is a catalytic residue. 2 residues coordinate substrate: aspartate 252 and asparagine 362. The active-site Nucleophile is cysteine 368.

This sequence belongs to the succinylarginine dihydrolase family. As to quaternary structure, homodimer.

It carries out the reaction N(2)-succinyl-L-arginine + 2 H2O + 2 H(+) = N(2)-succinyl-L-ornithine + 2 NH4(+) + CO2. It functions in the pathway amino-acid degradation; L-arginine degradation via AST pathway; L-glutamate and succinate from L-arginine: step 2/5. Its function is as follows. Catalyzes the hydrolysis of N(2)-succinylarginine into N(2)-succinylornithine, ammonia and CO(2). This chain is N-succinylarginine dihydrolase, found in Shewanella denitrificans (strain OS217 / ATCC BAA-1090 / DSM 15013).